Here is a 364-residue protein sequence, read N- to C-terminus: UDP-3-O-acylglucosamine N-acyltransferase (364 aa).

The active-site Proton acceptor is His267.

This sequence belongs to the transferase hexapeptide repeat family. LpxD subfamily. Homotrimer.

The catalysed reaction is a UDP-3-O-[(3R)-3-hydroxyacyl]-alpha-D-glucosamine + a (3R)-hydroxyacyl-[ACP] = a UDP-2-N,3-O-bis[(3R)-3-hydroxyacyl]-alpha-D-glucosamine + holo-[ACP] + H(+). Its pathway is bacterial outer membrane biogenesis; LPS lipid A biosynthesis. Catalyzes the N-acylation of UDP-3-O-acylglucosamine using 3-hydroxyacyl-ACP as the acyl donor. Is involved in the biosynthesis of lipid A, a phosphorylated glycolipid that anchors the lipopolysaccharide to the outer membrane of the cell. This Bordetella petrii (strain ATCC BAA-461 / DSM 12804 / CCUG 43448) protein is UDP-3-O-acylglucosamine N-acyltransferase.